A 316-amino-acid polypeptide reads, in one-letter code: Beta-ketoacyl-[acyl-carrier-protein] synthase III (316 aa).

Active-site residues include C112 and H243. Residues 244 to 248 (QANLR) are ACP-binding. N273 is an active-site residue.

This sequence belongs to the thiolase-like superfamily. FabH family. Homodimer.

Its subcellular location is the cytoplasm. The catalysed reaction is malonyl-[ACP] + acetyl-CoA + H(+) = 3-oxobutanoyl-[ACP] + CO2 + CoA. It participates in lipid metabolism; fatty acid biosynthesis. Functionally, catalyzes the condensation reaction of fatty acid synthesis by the addition to an acyl acceptor of two carbons from malonyl-ACP. Catalyzes the first condensation reaction which initiates fatty acid synthesis and may therefore play a role in governing the total rate of fatty acid production. Possesses both acetoacetyl-ACP synthase and acetyl transacylase activities. Its substrate specificity determines the biosynthesis of branched-chain and/or straight-chain of fatty acids. This is Beta-ketoacyl-[acyl-carrier-protein] synthase III from Actinobacillus succinogenes (strain ATCC 55618 / DSM 22257 / CCUG 43843 / 130Z).